We begin with the raw amino-acid sequence, 100 residues long: MSKLFDSRLADVIRKPVITEKATNALDLNQYTFEVDHRAAKPQIKAAVEALFSVKVIGVNTMNPPRRTRRVGKFSGKRSQVKKAIVRLAEGDKIQLFPES.

The protein belongs to the universal ribosomal protein uL23 family. Part of the 50S ribosomal subunit. Contacts protein L29, and trigger factor when it is bound to the ribosome.

One of the early assembly proteins it binds 23S rRNA. One of the proteins that surrounds the polypeptide exit tunnel on the outside of the ribosome. Forms the main docking site for trigger factor binding to the ribosome. The protein is Large ribosomal subunit protein uL23 of Prochlorococcus marinus (strain AS9601).